The sequence spans 138 residues: Acidic phospholipase A2 jerdoxin (138 aa).

Residues 1–16 form the signal peptide; sequence MRTLWIMAVLLVGVEG. 7 cysteine pairs are disulfide-bonded: cysteine 42–cysteine 131, cysteine 44–cysteine 60, cysteine 59–cysteine 111, cysteine 65–cysteine 138, cysteine 66–cysteine 104, cysteine 73–cysteine 97, and cysteine 91–cysteine 102. 3 residues coordinate Ca(2+): tyrosine 43, glycine 45, and glycine 47. The active site involves histidine 63. Aspartate 64 contacts Ca(2+). Aspartate 105 is a catalytic residue.

This sequence belongs to the phospholipase A2 family. Group II subfamily. D49 sub-subfamily. As to quaternary structure, monomer. Ca(2+) is required as a cofactor. As to expression, expressed by the venom gland.

Its subcellular location is the secreted. The enzyme catalyses a 1,2-diacyl-sn-glycero-3-phosphocholine + H2O = a 1-acyl-sn-glycero-3-phosphocholine + a fatty acid + H(+). In terms of biological role, snake venom phospholipase A2 (PLA2) that displays edema-inducing activities, exhibits indirect hemolytic activity, and inhibits ADP-induced platelet aggregation. PLA2 catalyzes the calcium-dependent hydrolysis of the 2-acyl groups in 3-sn-phosphoglycerides. In Protobothrops jerdonii (Jerdon's pitviper), this protein is Acidic phospholipase A2 jerdoxin.